The following is a 751-amino-acid chain: Phosphoribosylformylglycinamidine synthase subunit PurL (751 aa).

His-54 is an active-site residue. The ATP site is built by Tyr-57 and Lys-106. Glu-108 is a binding site for Mg(2+). Substrate is bound by residues 109-112 and Arg-131; that span reads SHNH. The active-site Proton acceptor is His-110. Residue Asp-132 participates in Mg(2+) binding. Gln-256 is a binding site for substrate. Position 284 (Asp-284) interacts with Mg(2+). 328–330 provides a ligand contact to substrate; sequence ESQ. The ATP site is built by Asp-516 and Gly-553. A Mg(2+)-binding site is contributed by Asn-554. Ser-556 is a binding site for substrate.

It belongs to the FGAMS family. In terms of assembly, monomer. Part of the FGAM synthase complex composed of 1 PurL, 1 PurQ and 2 PurS subunits.

The protein localises to the cytoplasm. The catalysed reaction is N(2)-formyl-N(1)-(5-phospho-beta-D-ribosyl)glycinamide + L-glutamine + ATP + H2O = 2-formamido-N(1)-(5-O-phospho-beta-D-ribosyl)acetamidine + L-glutamate + ADP + phosphate + H(+). It functions in the pathway purine metabolism; IMP biosynthesis via de novo pathway; 5-amino-1-(5-phospho-D-ribosyl)imidazole from N(2)-formyl-N(1)-(5-phospho-D-ribosyl)glycinamide: step 1/2. Functionally, part of the phosphoribosylformylglycinamidine synthase complex involved in the purines biosynthetic pathway. Catalyzes the ATP-dependent conversion of formylglycinamide ribonucleotide (FGAR) and glutamine to yield formylglycinamidine ribonucleotide (FGAM) and glutamate. The FGAM synthase complex is composed of three subunits. PurQ produces an ammonia molecule by converting glutamine to glutamate. PurL transfers the ammonia molecule to FGAR to form FGAM in an ATP-dependent manner. PurS interacts with PurQ and PurL and is thought to assist in the transfer of the ammonia molecule from PurQ to PurL. The chain is Phosphoribosylformylglycinamidine synthase subunit PurL from Nocardioides sp. (strain ATCC BAA-499 / JS614).